A 154-amino-acid polypeptide reads, in one-letter code: SsrA-binding protein (154 aa).

This sequence belongs to the SmpB family.

It is found in the cytoplasm. In terms of biological role, required for rescue of stalled ribosomes mediated by trans-translation. Binds to transfer-messenger RNA (tmRNA), required for stable association of tmRNA with ribosomes. tmRNA and SmpB together mimic tRNA shape, replacing the anticodon stem-loop with SmpB. tmRNA is encoded by the ssrA gene; the 2 termini fold to resemble tRNA(Ala) and it encodes a 'tag peptide', a short internal open reading frame. During trans-translation Ala-aminoacylated tmRNA acts like a tRNA, entering the A-site of stalled ribosomes, displacing the stalled mRNA. The ribosome then switches to translate the ORF on the tmRNA; the nascent peptide is terminated with the 'tag peptide' encoded by the tmRNA and targeted for degradation. The ribosome is freed to recommence translation, which seems to be the essential function of trans-translation. In Staphylococcus saprophyticus subsp. saprophyticus (strain ATCC 15305 / DSM 20229 / NCIMB 8711 / NCTC 7292 / S-41), this protein is SsrA-binding protein.